Reading from the N-terminus, the 209-residue chain is Protein-L-isoaspartate O-methyltransferase (209 aa).

Ser-55 is an active-site residue.

The protein belongs to the methyltransferase superfamily. L-isoaspartyl/D-aspartyl protein methyltransferase family.

It is found in the cytoplasm. The enzyme catalyses [protein]-L-isoaspartate + S-adenosyl-L-methionine = [protein]-L-isoaspartate alpha-methyl ester + S-adenosyl-L-homocysteine. Catalyzes the methyl esterification of L-isoaspartyl residues in peptides and proteins that result from spontaneous decomposition of normal L-aspartyl and L-asparaginyl residues. It plays a role in the repair and/or degradation of damaged proteins. The protein is Protein-L-isoaspartate O-methyltransferase of Anaeromyxobacter dehalogenans (strain 2CP-C).